The sequence spans 428 residues: tRNA(Ile2) 2-agmatinylcytidine synthetase TiaS (428 aa).

Belongs to the TiaS family.

The protein resides in the cytoplasm. It catalyses the reaction cytidine(34) in tRNA(Ile2) + agmatine + ATP + H2O = 2-agmatinylcytidine(34) in tRNA(Ile2) + AMP + 2 phosphate + 2 H(+). ATP-dependent agmatine transferase that catalyzes the formation of 2-agmatinylcytidine (agm2C) at the wobble position (C34) of tRNA(Ile2), converting the codon specificity from AUG to AUA. This Methanosarcina acetivorans (strain ATCC 35395 / DSM 2834 / JCM 12185 / C2A) protein is tRNA(Ile2) 2-agmatinylcytidine synthetase TiaS.